Consider the following 335-residue polypeptide: MSANSQPVLVADIGGTNARFALADTSLDAPLLKESIREYAVAEFPSLGDAARHHLEQIGAAASRGVFAVAGRVDGDEARITNHPWVISRSRTAAMLGFDELHLINDFAAQAMAISLLQPEDVVQVGGAAWVPGKPGQPRNYAVIGPGTGLGVGGLILRHGRCYPLETEGGHVSFPPGTPEEIRILEILSEQFGRVSNERLICGPGLVNIHRAVCEMAGIDPGQLQPVDVTARALHGDPQAMRTVDVFCAVFGAIAGDLVLTQGAWDGVFLTGGLTPKMLDSLQHSGFRQRFEHKGRFSSIMARVPSLAVMHPHAGLLGAAAYAADAERDAPGVAA.

11-16 contacts ATP; it reads ADIGGT.

The protein belongs to the bacterial glucokinase family.

The protein localises to the cytoplasm. The enzyme catalyses D-glucose + ATP = D-glucose 6-phosphate + ADP + H(+). This chain is Glucokinase, found in Stenotrophomonas maltophilia (strain K279a).